Consider the following 1308-residue polypeptide: Tau-tubulin kinase 1 (1308 aa).

The region spanning 34–297 (WKVLKKIGGG…LIMSVFENSM (264 aa)) is the Protein kinase domain. ATP-binding positions include 40–48 (IGGGGFGEI) and K63. The active-site Proton acceptor is the D154. 6 disordered regions span residues 364–397 (LSDQ…GPEA), 418–448 (PCVE…PVRS), 474–671 (ERRS…APPF), 720–899 (QVPL…AGGG), 985–1085 (EMES…LARL), and 1097–1308 (RLAS…PGAR). S441 is subject to Phosphoserine. Polar residues predominate over residues 485 to 496 (PSRQACSSQPAQ). S541 is modified (phosphoserine). 2 stretches are compositionally biased toward basic and acidic residues: residues 541–555 (SKEW…ELKD) and 574–589 (ELRP…RRLG). Residues 638–647 (SPSHSPLHSG) are compositionally biased toward low complexity. The span at 735–769 (GEEEEEEEEEEEEEEEEEEEEEEEEEEEEEEEEEA) shows a compositional bias: acidic residues. Over residues 786 to 795 (GSERSTERSQ) the composition is skewed to basic and acidic residues. Composition is skewed to polar residues over residues 868–885 (PTGS…SSIL) and 1020–1035 (ASQQ…TISP). A compositionally biased stretch (low complexity) spans 1097–1107 (RLASGASSSSS).

This sequence belongs to the protein kinase superfamily. CK1 Ser/Thr protein kinase family. Mg(2+) is required as a cofactor. It depends on Mn(2+) as a cofactor. Expressed in the brain. Strong expression in the cortical layers, the CA1 layers of the hippocampus and the granular layer of the cerebellum. Also expressed in the large cortical pyramidal cells in the temporal cortex, the CA1 pyramidal neurons and the cerebellum granular neurons.

Its subcellular location is the cytoplasm. The catalysed reaction is L-seryl-[protein] + ATP = O-phospho-L-seryl-[protein] + ADP + H(+). The enzyme catalyses L-threonyl-[protein] + ATP = O-phospho-L-threonyl-[protein] + ADP + H(+). Its function is as follows. Serine/threonine kinase which is able to phosphorylate TAU on serine, threonine and tyrosine residues. Induces aggregation of TAU. This Mus musculus (Mouse) protein is Tau-tubulin kinase 1 (Ttbk1).